The following is a 443-amino-acid chain: D-inositol 3-phosphate glycosyltransferase (443 aa).

His-26 provides a ligand contact to 1D-myo-inositol 3-phosphate. Residues 32–33 (QP) and Gly-40 each bind UDP-N-acetyl-alpha-D-glucosamine. Residues 37–42 (DAGGMN), Lys-95, Tyr-128, Thr-152, and Arg-172 contribute to the 1D-myo-inositol 3-phosphate site. 3 residues coordinate UDP-N-acetyl-alpha-D-glucosamine: Arg-246, Lys-251, and Gln-304. Residues Tyr-313, Arg-314, and Ala-316 each contribute to the Mg(2+) site. Residues Glu-326 and Glu-334 each contribute to the UDP-N-acetyl-alpha-D-glucosamine site. Thr-340 contacts Mg(2+).

Belongs to the glycosyltransferase group 1 family. MshA subfamily. Homodimer.

The catalysed reaction is 1D-myo-inositol 3-phosphate + UDP-N-acetyl-alpha-D-glucosamine = 1D-myo-inositol 2-acetamido-2-deoxy-alpha-D-glucopyranoside 3-phosphate + UDP + H(+). Functionally, catalyzes the transfer of a N-acetyl-glucosamine moiety to 1D-myo-inositol 3-phosphate to produce 1D-myo-inositol 2-acetamido-2-deoxy-glucopyranoside 3-phosphate in the mycothiol biosynthesis pathway. The polypeptide is D-inositol 3-phosphate glycosyltransferase (Mycobacteroides abscessus (strain ATCC 19977 / DSM 44196 / CCUG 20993 / CIP 104536 / JCM 13569 / NCTC 13031 / TMC 1543 / L948) (Mycobacterium abscessus)).